A 402-amino-acid chain; its full sequence is Candidapepsin-1 (402 aa).

A signal peptide (or 18, or 21) is located at residues 1–25 (MVAIVTLTRQVLLTIALALFAQGAA). The propeptide at 26–62 (IPEEAAKRDDNPGFVALDFDVLRKPLNLTEALLREKR) is activation peptide. Asn-52 is a glycosylation site (N-linked (GlcNAc...) asparagine). Residues 76-389 (YASKVSVGSN…NLDANTISIA (314 aa)) enclose the Peptidase A1 domain. Residue Asp-94 is part of the active site. A disulfide bridge connects residues Cys-109 and Cys-115. The active site involves Asp-282. A disulfide bridge links Cys-320 with Cys-354.

This sequence belongs to the peptidase A1 family. Post-translationally, O-glycosylated.

It is found in the secreted. The enzyme catalyses Preferential cleavage at the carboxyl of hydrophobic amino acids, but fails to cleave 15-Leu-|-Tyr-16, 16-Tyr-|-Leu-17 and 24-Phe-|-Phe-25 of insulin B chain. Activates trypsinogen, and degrades keratin.. This is Candidapepsin-1 (SAPP1) from Candida parapsilosis (Yeast).